We begin with the raw amino-acid sequence, 330 residues long: Ketol-acid reductoisomerase (NADP(+)) (330 aa).

One can recognise a KARI N-terminal Rossmann domain in the interval 3–184 (LPVYYDKDID…GGGRMGVLKT (182 aa)). NADP(+)-binding positions include 26–29 (YGAQ), Ser52, and Ser54. The active site involves His109. Position 135 (Gly135) interacts with NADP(+). Residues 185-329 (SFKEECESDL…EILRAPFNHK (145 aa)) enclose the KARI C-terminal knotted domain. 4 residues coordinate Mg(2+): Asp193, Glu197, Glu229, and Glu233. Residue Ser254 coordinates substrate.

Belongs to the ketol-acid reductoisomerase family. Requires Mg(2+) as cofactor.

It carries out the reaction (2R)-2,3-dihydroxy-3-methylbutanoate + NADP(+) = (2S)-2-acetolactate + NADPH + H(+). The enzyme catalyses (2R,3R)-2,3-dihydroxy-3-methylpentanoate + NADP(+) = (S)-2-ethyl-2-hydroxy-3-oxobutanoate + NADPH + H(+). Its pathway is amino-acid biosynthesis; L-isoleucine biosynthesis; L-isoleucine from 2-oxobutanoate: step 2/4. The protein operates within amino-acid biosynthesis; L-valine biosynthesis; L-valine from pyruvate: step 2/4. In terms of biological role, involved in the biosynthesis of branched-chain amino acids (BCAA). Catalyzes an alkyl-migration followed by a ketol-acid reduction of (S)-2-acetolactate (S2AL) to yield (R)-2,3-dihydroxy-isovalerate. In the isomerase reaction, S2AL is rearranged via a Mg-dependent methyl migration to produce 3-hydroxy-3-methyl-2-ketobutyrate (HMKB). In the reductase reaction, this 2-ketoacid undergoes a metal-dependent reduction by NADPH to yield (R)-2,3-dihydroxy-isovalerate. This chain is Ketol-acid reductoisomerase (NADP(+)), found in Helicobacter pylori (strain HPAG1).